Consider the following 187-residue polypeptide: Protein GrpE (187 aa).

Residues 1–15 are compositionally biased toward basic and acidic residues; the sequence is MKETKQEEMEVREDC. The disordered stretch occupies residues 1-40; it reads MKETKQEEMEVREDCESVDSNLEATVEEMESTKGTSEDLE.

The protein belongs to the GrpE family. Homodimer.

Its subcellular location is the cytoplasm. Functionally, participates actively in the response to hyperosmotic and heat shock by preventing the aggregation of stress-denatured proteins, in association with DnaK and GrpE. It is the nucleotide exchange factor for DnaK and may function as a thermosensor. Unfolded proteins bind initially to DnaJ; upon interaction with the DnaJ-bound protein, DnaK hydrolyzes its bound ATP, resulting in the formation of a stable complex. GrpE releases ADP from DnaK; ATP binding to DnaK triggers the release of the substrate protein, thus completing the reaction cycle. Several rounds of ATP-dependent interactions between DnaJ, DnaK and GrpE are required for fully efficient folding. This Alkaliphilus oremlandii (strain OhILAs) (Clostridium oremlandii (strain OhILAs)) protein is Protein GrpE.